The sequence spans 493 residues: Glutamyl-tRNA(Gln) amidotransferase subunit A (493 aa).

Residues lysine 79 and serine 159 each act as charge relay system in the active site. Catalysis depends on serine 183, which acts as the Acyl-ester intermediate.

Belongs to the amidase family. GatA subfamily. As to quaternary structure, heterotrimer of A, B and C subunits.

It carries out the reaction L-glutamyl-tRNA(Gln) + L-glutamine + ATP + H2O = L-glutaminyl-tRNA(Gln) + L-glutamate + ADP + phosphate + H(+). In terms of biological role, allows the formation of correctly charged Gln-tRNA(Gln) through the transamidation of misacylated Glu-tRNA(Gln) in organisms which lack glutaminyl-tRNA synthetase. The reaction takes place in the presence of glutamine and ATP through an activated gamma-phospho-Glu-tRNA(Gln). The protein is Glutamyl-tRNA(Gln) amidotransferase subunit A of Rhizobium meliloti (strain 1021) (Ensifer meliloti).